The chain runs to 536 residues: MSPHRETTGDESTTTTVPQNGTNGAAAPELVAVPTNGAAVKAPETLAVQNGANSRVKPIQRSSHLVAADLDGEFDLICVGFGPASLSVAIALHDTLAAGKKLRPDGSSPKVLFLEKQTRFAWHAGMLLPGAKMQISFIKDLATLRDPRSHFTFLNYLHQHDRLVDFTNLSTFLPARVEYEDYMRWCSAHFEHLAQYDHEVVSVTPAVKKADTVKLFAVEARNNVNGQVQTFRGRNIMLATGGKPSFPKSFPVKHPRILHSSQYAYMVPQILTDKNAAYKVVVVGAGQSAAEIFHNIQNLYPNSSTQLVMRQEFLKPSDDSPFVNSIFNPEYIDALFPKSAKGRSEFLVDARATNYGVVRLELIEELFERMYAQKRVLGPDERTWPHRIMGCRQISNIEPHGDRLEVKIHGLSDGVVNSADEEILSADLIIAATGYQRNAHIDMLKSTWEMLPKAVPGTAMFNKGVTGWNVDTEQGERKLAVGRDYRVQYKAGSVAGDAGIWLQGCCEGTHGLSDTLLSVLATRSGEMVQSIFGTEH.

The interval 1–25 is disordered; that stretch reads MSPHRETTGDESTTTTVPQNGTNGA. FAD contacts are provided by residues 115-123 and Q134; that span reads EKQTRFAWH. K139 lines the L-ornithine pocket. V200 contributes to the FAD binding site. R310 contributes to the NADP(+) binding site. Residues 324–327 and N354 each bind L-ornithine; that span reads NSIF. 515–517 contributes to the FAD binding site; the sequence is TLL. An L-ornithine-binding site is contributed by S518.

It belongs to the lysine N(6)-hydroxylase/L-ornithine N(5)-oxygenase family. Homotetramer. FAD is required as a cofactor.

It carries out the reaction L-ornithine + NADH + O2 = N(5)-hydroxy-L-ornithine + NAD(+) + H2O. It catalyses the reaction L-ornithine + NADPH + O2 = N(5)-hydroxy-L-ornithine + NADP(+) + H2O. Its pathway is siderophore biosynthesis. Functionally, L-ornithine N(5)-monooxygenase; part of the gene cluster that mediates the biosynthesis of at least 11 siderophores, including beauverichelin A, dimerumic acid (DA), Na-dimethyl coprogen (NADC), eleutherazine B, ferricrocin (FC), fusarinine A, fusarinine C (FsC), metachelin A, mevalonolactone, rhodotorulic acid (RA) and tenellin. This cocktail of siderophores for iron metabolism is essential for virulence, and more specifically for the fungal virulence in penetrating through the host cuticle. Siderophore synthesis is also involved in conidial germination under iron-deficient conditions. SIDA initiates the biosynthesis of these siderophores with the enzymatic hydroxylation of ornithine. SIDA is indispensable for the production of most siderophores including fusarinine C and ferricrocin but not mevalonolactone and eleutherazine B. However, SIDA mediates the metabolic interplay between synthesis of mevalonolactone and eleutherazine B and other siderophores. The chain is L-ornithine N(5)-monooxygenase SIDA from Beauveria bassiana (strain ARSEF 2860) (White muscardine disease fungus).